Consider the following 422-residue polypeptide: UDP-N-acetylglucosamine 1-carboxyvinyltransferase (422 aa).

Residue 22-23 (KN) coordinates phosphoenolpyruvate. Position 92 (Arg-92) interacts with UDP-N-acetyl-alpha-D-glucosamine. The active-site Proton donor is Cys-116. 2-(S-cysteinyl)pyruvic acid O-phosphothioketal is present on Cys-116. The UDP-N-acetyl-alpha-D-glucosamine site is built by Asp-306 and Ile-328.

The protein belongs to the EPSP synthase family. MurA subfamily.

It is found in the cytoplasm. The catalysed reaction is phosphoenolpyruvate + UDP-N-acetyl-alpha-D-glucosamine = UDP-N-acetyl-3-O-(1-carboxyvinyl)-alpha-D-glucosamine + phosphate. Its pathway is cell wall biogenesis; peptidoglycan biosynthesis. In terms of biological role, cell wall formation. Adds enolpyruvyl to UDP-N-acetylglucosamine. This Elusimicrobium minutum (strain Pei191) protein is UDP-N-acetylglucosamine 1-carboxyvinyltransferase.